The chain runs to 628 residues: MAAPPLSSWPWASLGSYKYVLYGAVVWKVAEEWRQQGAAPVGSWWLHLLLLFAARGLTYQFWFSYGNMLFFTRRRRVVPDSVDFRQVDAEWDWDNFLLLQTLIGATLVGSPAVARQQLLLPSLKQAWDPRGWAIALLLHVLVAEPLFYWAHRALHRAPLFSRYHAAHHHASVTTPLTAGFGTPLESLLLTVVIGVPLAGAFLMGVGSVGLVYGHVLLFDFLRSMGYSNVEVISPRVFQAVPLLRYLIYTPTYLSLHHREKDSNFCLFMPIFDLLGGTLNHKSWELQKEVYLGKNDQAPDFVFLAHVVDIMASMHVPFVLRSCSSTPFANHFVLLPFWPVAFGFMLLMWCCSKNFLVSSYRLRGNLHQMWTVPRYGFQYFIPAAKKGINEQIELAILRADRMGVKVLSLAALNKNEALNGGGTLFVNKHPELRVRVVHGNTLTAAVILNEIPSNVKDVFLTGATSKLGRAIALYLCRKKIRVLMLTLSSERFLKIQREAPAEFQQYLVQVTKYQPAQNCKTWLVGKWLSPREQRWAPAGTHFHQFVVPPIIGFRRDCTYGKLAAMRLPKDVQGLGYCEYTMERGVVHACHAGGVVHFLEGWEHHEVGAIDVDRIDVVWKAALKHGLTPA.

A run of 5 helical transmembrane segments spans residues 37-57, 131-151, 191-211, 299-319, and 331-351; these read GAAPVGSWWLHLLLLFAARGL, GWAIALLLHVLVAEPLFYWAH, VVIGVPLAGAFLMGVGSVGLV, DFVFLAHVVDIMASMHVPFVL, and FVLLPFWPVAFGFMLLMWCCS. The Fatty acid hydroxylase domain maps to 137–277; the sequence is LLHVLVAEPL…MPIFDLLGGT (141 aa).

It belongs to the sterol desaturase family. As to quaternary structure, homodimer.

It localises to the endoplasmic reticulum membrane. The catalysed reaction is a long-chain fatty aldehyde + 2 NADPH + O2 + H(+) = a long-chain alkane + formate + 2 NADP(+) + H2O. Its function is as follows. Aldehyde decarbonylase involved in the conversion of aldehydes to alkanes. Core component of a very-long-chain alkane synthesis complex. This Oryza sativa subsp. indica (Rice) protein is Very-long-chain aldehyde decarbonylase GL1-2.